The primary structure comprises 363 residues: NADH-quinone oxidoreductase subunit H (363 aa).

Helical transmembrane passes span 29-49 (VLKILMIAIPLIVSVAFYVVW), 62-82 (GPMYVGMGLFQAFADVFKLLF), 94-114 (AIFVIAPLLTLAPSFAAWAVV), 127-147 (VGLLYLLAMTSLGVYGIILAG), 166-186 (VVSYEIAMGFALVGVMIAAGS), 202-222 (FFDWFLIPLFPLFIVYWVSGV), 239-257 (IVAGHMVEYSGSVFALFFL), 264-286 (ILVSFLISIFFLGGWLSPIQGWV), 293-313 (LIDWVWNGGWPWLLLKVLFFA), and 339-359 (FIPLTIVWIAVTALMVFSGVI).

Belongs to the complex I subunit 1 family. In terms of assembly, NDH-1 is composed of 14 different subunits. Subunits NuoA, H, J, K, L, M, N constitute the membrane sector of the complex.

The protein resides in the cell inner membrane. The catalysed reaction is a quinone + NADH + 5 H(+)(in) = a quinol + NAD(+) + 4 H(+)(out). NDH-1 shuttles electrons from NADH, via FMN and iron-sulfur (Fe-S) centers, to quinones in the respiratory chain. The immediate electron acceptor for the enzyme in this species is believed to be ubiquinone. Couples the redox reaction to proton translocation (for every two electrons transferred, four hydrogen ions are translocated across the cytoplasmic membrane), and thus conserves the redox energy in a proton gradient. This subunit may bind ubiquinone. In Xylella fastidiosa (strain Temecula1 / ATCC 700964), this protein is NADH-quinone oxidoreductase subunit H.